We begin with the raw amino-acid sequence, 238 residues long: tRNA (guanine-N(7)-)-methyltransferase (238 aa).

S-adenosyl-L-methionine-binding residues include Glu68, Glu93, Asp120, and Asp143. Asp143 is a catalytic residue. Residues Lys147, Asp179, and Thr216–Glu219 each bind substrate.

Belongs to the class I-like SAM-binding methyltransferase superfamily. TrmB family.

It catalyses the reaction guanosine(46) in tRNA + S-adenosyl-L-methionine = N(7)-methylguanosine(46) in tRNA + S-adenosyl-L-homocysteine. It functions in the pathway tRNA modification; N(7)-methylguanine-tRNA biosynthesis. Catalyzes the formation of N(7)-methylguanine at position 46 (m7G46) in tRNA. The protein is tRNA (guanine-N(7)-)-methyltransferase of Shewanella woodyi (strain ATCC 51908 / MS32).